A 167-amino-acid chain; its full sequence is Transcription factor 24 (167 aa).

Residues 1–23 (MDRGRPAGSPLSASAEPAPLAAA) are compositionally biased toward low complexity. The segment at 1 to 60 (MDRGRPAGSPLSASAEPAPLAAAIRDSRPGRTGPGPAGPGGGSRSGSGRPAAANAARERS) is disordered. A compositionally biased stretch (gly residues) spans 32–45 (TGPGPAGPGGGSRS). The span at 46–55 (GSGRPAAANA) shows a compositional bias: low complexity. The bHLH domain occupies 49 to 101 (RPAAANAARERSRVQTLRHAFLELQRTLPSVPPDTKLSKLDVLLLATTYIAHL).

Efficient DNA binding requires dimerization with another bHLH protein.

It localises to the nucleus. Functionally, putative transcription factor. This is Transcription factor 24 (TCF24) from Homo sapiens (Human).